A 130-amino-acid chain; its full sequence is Small ribosomal subunit protein uS8 (130 aa).

Belongs to the universal ribosomal protein uS8 family.

The polypeptide is Small ribosomal subunit protein uS8 (RPS22) (Kluyveromyces marxianus (Yeast)).